Consider the following 390-residue polypeptide: Heparan sulfate glucosamine 3-O-sulfotransferase 3B1 (390 aa).

The tract at residues 1–25 (MGQRLSGGRSCLDVPGRFLPQPPPP) is disordered. Residues 1 to 32 (MGQRLSGGRSCLDVPGRFLPQPPPPPPPVRRK) are Cytoplasmic-facing. Residues 33–53 (LALLFAMLCIWLYMFLYSCAG) traverse the membrane as a helical; Signal-anchor for type II membrane protein segment. Topologically, residues 54 to 390 (SCTAAPGLLL…QMTGRDFGWD (337 aa)) are lumenal. Residues 79-125 (TAPNETSPKMPFRAPPANSLAAGKDKTVGAGSQEEQSPEAPDSPSPI) form a disordered region. N82 carries an N-linked (GlcNAc...) asparagine glycan. 147-151 (KGGTR) provides a ligand contact to 3'-phosphoadenylyl sulfate. Residues 169-175 (EPHFFDR) and 200-203 (KTPS) each bind substrate. 3'-phosphoadenylyl sulfate contacts are provided by R228 and S236. Residue N258 is glycosylated (N-linked (GlcNAc...) asparagine). 268-269 (WS) is a binding site for substrate. N-linked (GlcNAc...) asparagine glycosylation occurs at N329. C336 and C348 are joined by a disulfide. 3'-phosphoadenylyl sulfate is bound at residue 353–357 (KGRAH).

It belongs to the sulfotransferase 1 family.

The protein resides in the golgi apparatus membrane. The enzyme catalyses alpha-D-glucosaminyl-[heparan sulfate](n) + 3'-phosphoadenylyl sulfate = 3-sulfo-alpha-D-glucosaminyl-[heparan sulfate](n) + adenosine 3',5'-bisphosphate + H(+). In terms of biological role, sulfotransferase that utilizes 3'-phospho-5'-adenylyl sulfate (PAPS) to catalyze the transfer of a sulfo group to an N-unsubstituted glucosamine linked to a 2-O-sulfo iduronic acid unit on heparan sulfate. Catalyzes the O-sulfation of glucosamine in IdoUA2S-GlcNS and also in IdoUA2S-GlcNH2. Unlike HS3ST1/3-OST-1, does not convert non-anticoagulant heparan sulfate to anticoagulant heparan sulfate. The chain is Heparan sulfate glucosamine 3-O-sulfotransferase 3B1 (Hs3st3b1) from Mus musculus (Mouse).